The sequence spans 123 residues: Small ribosomal subunit protein uS12cz/uS12cy (123 aa).

It belongs to the universal ribosomal protein uS12 family. In terms of assembly, part of the 30S ribosomal subunit.

It is found in the plastid. Its subcellular location is the chloroplast. Its function is as follows. With S4 and S5 plays an important role in translational accuracy. Located at the interface of the 30S and 50S subunits. This chain is Small ribosomal subunit protein uS12cz/uS12cy (rps12-A), found in Nandina domestica (Heavenly bamboo).